The primary structure comprises 501 residues: Cytochrome P450 2J1 (501 aa).

Residue Cys447 coordinates heme.

This sequence belongs to the cytochrome P450 family. Heme is required as a cofactor. Small intestine.

It localises to the endoplasmic reticulum membrane. It is found in the microsome membrane. It catalyses the reaction an organic molecule + reduced [NADPH--hemoprotein reductase] + O2 = an alcohol + oxidized [NADPH--hemoprotein reductase] + H2O + H(+). Functionally, catalyzes the N-demethylation of benzphetamine to formaldehyde. The polypeptide is Cytochrome P450 2J1 (CYP2J1) (Oryctolagus cuniculus (Rabbit)).